Consider the following 304-residue polypeptide: Transmembrane protein 178A (304 aa).

An N-terminal signal peptide occupies residues 1 to 25; that stretch reads MESRGLVTAVSLTLSICSLLLLVTA. The Extracellular portion of the chain corresponds to 26–186; the sequence is IFTDHWYETD…LLHLRRITAG (161 aa). N-linked (GlcNAc...) asparagine glycosylation occurs at Asn165. Residues 187 to 207 form a helical membrane-spanning segment; it reads FLGMAAAVLLCGCIVAAISFF. Over 208–215 the chain is Cytoplasmic; it reads WEESLTQH. Residues 216–236 traverse the membrane as a helical segment; the sequence is VAGLLFLMTGIFCTISLCTYA. At 237-267 the chain is on the extracellular side; the sequence is ASVAYELNRQPKFIYGLPSDVEHGYSWSLFC. The chain crosses the membrane as a helical span at residues 268 to 288; that stretch reads AWCSLGLIVAAGCLCTAYPFI. The Cytoplasmic portion of the chain corresponds to 289-304; it reads SRTKILHLKFARDSCV.

Belongs to the TMEM178 family.

Its subcellular location is the endoplasmic reticulum membrane. May act as a negative regulator of osteoclast differentiation. The polypeptide is Transmembrane protein 178A (tmem178a) (Xenopus laevis (African clawed frog)).